Reading from the N-terminus, the 184-residue chain is GTP-binding protein Rheb (184 aa).

Lys-8 is covalently cross-linked (Glycyl lysine isopeptide (Lys-Gly) (interchain with G-Cter in ubiquitin)). Positions 16, 17, 18, 19, 20, 21, 32, and 33 each coordinate GDP. Ser-16 is a binding site for GTP. Residues Gly-18, Lys-19, Ser-20, Ser-21, and Val-32 each contribute to the GTP site. Ser-20 contacts Mg(2+). GTP contacts are provided by Tyr-35, Thr-38, Asn-119, and Asp-122. Positions 35 to 43 match the Effector region motif; that stretch reads YDPTIENTF. Residue Thr-38 participates in Mg(2+) binding. Residues Asn-119 and Asp-122 each coordinate GDP. Ser-130 carries the phosphoserine; by MAPKAPK5 modification. Ala-150 provides a ligand contact to GDP. A GTP-binding site is contributed by Ala-150. Cys-181 bears the Cysteine methyl ester mark. A lipid anchor (S-farnesyl cysteine) is attached at Cys-181. A propeptide spans 182-184 (removed in mature form); the sequence is SVM.

It belongs to the small GTPase superfamily. Rheb family. In terms of assembly, associates with the mTORC1 complex (MTOR, MLST8 and RPTOR) in a guanyl nucleotide-independent manner. Interacts with TSC2. Interacts with MCRS1; the interaction maintains RHEB at the lysosome in its active GTP-bound form and prevents its interaction with the mTORC1 complex inhibitor TSC2, ensuring activation of the mTORC1 complex by RHEB. Interacts (when prenylated) with PDE6D; this promotes release from membranes. In terms of processing, farnesylation is important for efficiently activating mTORC1-mediated signaling. Polyubiquitinated in response to amino acid, promoting its interaction with MTOR and mTORC1 activation. Deubiquitination by ATXN3 promotes recruitment of the TSC-TBC complex and RHEB inactivation by TSC2. Monoubiquitinated at Lys-8 by RNF152, promoting its association with the TSC-TBC complex. Deubiquitinated at Lys-8 by USP4, promoting mTORC1 activation. Post-translationally, phosphorylation by MAPKAPK5 impairs GTP-binding and inactivation. Ubiquitous. Highest levels observed in skeletal and cardiac muscle.

The protein localises to the endomembrane system. The protein resides in the lysosome membrane. It is found in the golgi apparatus membrane. It localises to the endoplasmic reticulum membrane. Its subcellular location is the cytoplasm. The protein localises to the cytosol. The enzyme catalyses GTP + H2O = GDP + phosphate + H(+). Its activity is regulated as follows. Alternates between an inactive form bound to GDP and an active form bound to GTP. Inactivated by the TSC-TBC complex via the GTPase activating protein (GAP) domain of TSC2. Autoinhibited by Tyr-35, which constrains the active site conformation, restricting the access of the catalytic Asp-65 to the nucleotide-binding pocket. Specifically inhibited by NR1 (4-bromo-6-(3,4-dichlorophenylthio)-1-(4-(dimethylcarbamoyl)benzyl)-1H-indole-2-carboxylic acid). Small GTPase that acts as an allosteric activator of the canonical mTORC1 complex, an evolutionarily conserved central nutrient sensor that stimulates anabolic reactions and macromolecule biosynthesis to promote cellular biomass generation and growth. In response to nutrients, growth factors or amino acids, specifically activates the protein kinase activity of MTOR, the catalytic component of the mTORC1 complex: acts by causing a conformational change that allows the alignment of residues in the active site of MTOR, thereby enhancing the phosphorylation of ribosomal protein S6 kinase (RPS6KB1 and RPS6KB2) and EIF4EBP1 (4E-BP1). RHEB is also required for localization of the TSC-TBC complex to lysosomal membranes. In response to starvation, RHEB is inactivated by the TSC-TBC complex, preventing activation of mTORC1. Has low intrinsic GTPase activity. The sequence is that of GTP-binding protein Rheb from Homo sapiens (Human).